A 247-amino-acid chain; its full sequence is uncharacterized protein (247 aa).

The N-acetyltransferase domain occupies 102-247 (RSIMSRTNDN…ISEHHYRIKR (146 aa)).

It belongs to the acetyltransferase family.

This is an uncharacterized protein from Bacillus subtilis (strain 168).